We begin with the raw amino-acid sequence, 137 residues long: Small ribosomal subunit protein uS9 (137 aa).

Basic and acidic residues predominate over residues Leu105–Ala117. Positions Leu105–Arg137 are disordered. Positions Lys118 to Arg137 are enriched in basic residues.

Belongs to the universal ribosomal protein uS9 family.

This chain is Small ribosomal subunit protein uS9, found in Prochlorococcus marinus (strain MIT 9211).